The chain runs to 374 residues: DNA-directed RNA polymerase subunit alpha (374 aa).

Residues 1 to 270 (MIFDEDSSSV…DQFQQFINFD (270 aa)) form an alpha N-terminal domain (alpha-NTD) region. Positions 282–374 (KDVLPYDSNL…ESLSKQYSEE (93 aa)) are alpha C-terminal domain (alpha-CTD).

This sequence belongs to the RNA polymerase alpha chain family. In terms of assembly, homodimer. The RNAP catalytic core consists of 2 alpha, 1 beta, 1 beta' and 1 omega subunit. When a sigma factor is associated with the core the holoenzyme is formed, which can initiate transcription.

The enzyme catalyses RNA(n) + a ribonucleoside 5'-triphosphate = RNA(n+1) + diphosphate. In terms of biological role, DNA-dependent RNA polymerase catalyzes the transcription of DNA into RNA using the four ribonucleoside triphosphates as substrates. This chain is DNA-directed RNA polymerase subunit alpha, found in Ehrlichia ruminantium (strain Gardel).